The following is a 122-amino-acid chain: Large ribosomal subunit protein uL14c (122 aa).

Belongs to the universal ribosomal protein uL14 family. Part of the 50S ribosomal subunit.

It is found in the plastid. The protein localises to the chloroplast. Its function is as follows. Binds to 23S rRNA. The polypeptide is Large ribosomal subunit protein uL14c (Populus alba (White poplar)).